A 152-amino-acid chain; its full sequence is Transcriptional regulator MraZ (152 aa).

2 consecutive SpoVT-AbrB domains span residues 5–52 and 81–124; these read ASAI…PLDE and AHEC…DEAA.

It belongs to the MraZ family. In terms of assembly, forms oligomers.

The protein localises to the cytoplasm. Its subcellular location is the nucleoid. This is Transcriptional regulator MraZ from Shewanella violacea (strain JCM 10179 / CIP 106290 / LMG 19151 / DSS12).